A 282-amino-acid polypeptide reads, in one-letter code: Epoxide hydrolase LasB (282 aa).

The interval 1–133 (MPAETVRKEV…TDSSWTARPA (133 aa)) is lsd19A. Tyr14 is a substrate binding site. Catalysis depends on Asp38, which acts as the Proton acceptor; for 5-exo epoxide-opening cyclization activity. Substrate contacts are provided by Glu65 and His146. The lsd19B stretch occupies residues 134–282 (PDEERRKELA…TDVSLLDPAA (149 aa)). The Proton acceptor; for 6-endo epoxide-opening cyclization activity role is filled by Asp170. Positions 177, 197, and 251 each coordinate substrate.

Epoxide hydrolase responsible for the double epoxide-opening cyclization of bisepoxyprelasalocid A to form lasalocid A, a polyether antibiotic. In vitro, accepts various substrate analogs differing in the left segment of lasalocid and epoxide stereochemistry to afford products with excellent regioselectivity. The chain is Epoxide hydrolase LasB (lsd19) from Streptomyces lasalocidi (Streptomyces lasaliensis).